The following is a 638-amino-acid chain: Adhesion G-protein coupled receptor F2 (638 aa).

Positions 1-25 are cleaved as a signal peptide; it reads MISARWLYCLVLLLATESCRLFCQA. Over 26 to 386 the chain is Extracellular; the sequence is ASKSKENVMP…ESPVLTYITY (361 aa). Residues Asn155, Asn219, Asn248, Asn293, and Asn311 are each glycosylated (N-linked (GlcNAc...) asparagine). A GAIN-B domain is found at 233 to 377; that stretch reads PRNSLGKNFT…SILMSPNTVE (145 aa). 2 cysteine pairs are disulfide-bonded: Cys329/Cys356 and Cys344/Cys358. Positions 329–377 are GPS; it reads CVGWHSLESRWDRRACKMIQENSRQAICRCQPNKFFTSFSILMSPNTVE. Residues 387 to 407 form a helical membrane-spanning segment; that stretch reads IGLGISICSLIICLAIEALVW. The Cytoplasmic segment spans residues 408–422; the sequence is SQVTKTEISYLRHLC. A helical transmembrane segment spans residues 423 to 443; the sequence is IANIAVTLLMADVWFIVASFL. Residues 444–465 are Extracellular-facing; the sequence is SGPIVHHNGCVTATFFVHFFYL. A helical membrane pass occupies residues 466–486; that stretch reads SVFFWMLAKALLILYGILIVF. At 487–493 the chain is on the cytoplasmic side; it reads HTLPKSC. Residues 494 to 514 traverse the membrane as a helical segment; it reads LVASLFTVGYGCPLVIAVITL. The Extracellular portion of the chain corresponds to 515 to 541; that stretch reads AVTEPGKGYLRPEACWLNWDMTKALLA. Residues 542 to 562 form a helical membrane-spanning segment; sequence FVVPALAIVVVNLITVTLVII. Over 563 to 586 the chain is Cytoplasmic; sequence KTQRAAVGSSMFQEVRAIVRICKN. Residues 587–607 form a helical membrane-spanning segment; that stretch reads IAILTPLLGLTWGFGIATVVA. Topologically, residues 608-610 are extracellular; that stretch reads GHS. A helical transmembrane segment spans residues 611–631; sequence LAFHIIFSLLNALQVSPDAMI. At 632 to 638 the chain is on the cytoplasmic side; that stretch reads ESEWRGC.

It belongs to the G-protein coupled receptor 2 family. Adhesion G-protein coupled receptor (ADGR) subfamily.

The protein localises to the membrane. In terms of biological role, orphan receptor. In Rattus norvegicus (Rat), this protein is Adhesion G-protein coupled receptor F2 (Adgrf2).